A 154-amino-acid polypeptide reads, in one-letter code: Ribonuclease H (154 aa).

The region spanning 5–146 (EQNIVYLYCD…ADELANRGID (142 aa)) is the RNase H type-1 domain. Mg(2+)-binding residues include Asp-14, Glu-52, Asp-74, and Asp-138.

The protein belongs to the RNase H family. In terms of assembly, monomer. The cofactor is Mg(2+).

The protein resides in the cytoplasm. It catalyses the reaction Endonucleolytic cleavage to 5'-phosphomonoester.. Endonuclease that specifically degrades the RNA of RNA-DNA hybrids. The polypeptide is Ribonuclease H (Coxiella burnetii (strain CbuG_Q212) (Coxiella burnetii (strain Q212))).